Consider the following 466-residue polypeptide: Glutamate--tRNA ligase 2 (466 aa).

The 'HIGH' region signature appears at 11–21 (PSPTGFLHIGG). Residues 239–243 (KLSKR) carry the 'KMSKS' region motif. Lys-242 serves as a coordination point for ATP.

This sequence belongs to the class-I aminoacyl-tRNA synthetase family. Glutamate--tRNA ligase type 1 subfamily. As to quaternary structure, monomer.

Its subcellular location is the cytoplasm. The catalysed reaction is tRNA(Glu) + L-glutamate + ATP = L-glutamyl-tRNA(Glu) + AMP + diphosphate. Catalyzes the attachment of glutamate to tRNA(Glu) in a two-step reaction: glutamate is first activated by ATP to form Glu-AMP and then transferred to the acceptor end of tRNA(Glu). The chain is Glutamate--tRNA ligase 2 from Roseobacter denitrificans (strain ATCC 33942 / OCh 114) (Erythrobacter sp. (strain OCh 114)).